Consider the following 535-residue polypeptide: 3-hydroxyindolin-2-one monooxygenase (535 aa).

2 consecutive transmembrane segments (helical) span residues 14 to 34 (VVQCTPTQAAAVLGVLLLLAI) and 469 to 489 (ICAGATFAIATVEIMLANLIY). Heme is bound at residue C470.

The protein belongs to the cytochrome P450 family. Heme serves as cofactor.

The protein localises to the membrane. It catalyses the reaction 3-hydroxyindolin-2-one + reduced [NADPH--hemoprotein reductase] + O2 = 2-hydroxy-2H-1,4-benzoxazin-3(4H)-one + oxidized [NADPH--hemoprotein reductase] + H2O + H(+). It participates in secondary metabolite biosynthesis; 2,4-dihydroxy-1,4-benzoxazin-3-one biosynthesis; 2,4-dihydroxy-1,4-benzoxazin-3-one from indoleglycerol phosphate: step 4/5. Functionally, catalyzes the conversion of 3-hydroxyindolin-2-one to 2-hydroxy-1,4-benzoxazin-3-one (HBOA). In Zea mays (Maize), this protein is 3-hydroxyindolin-2-one monooxygenase (CYP71C1).